The following is a 597-amino-acid chain: Formate--tetrahydrofolate ligase (597 aa).

ATP is bound at residue 84-91 (TPLGEGKS).

This sequence belongs to the formate--tetrahydrofolate ligase family.

It catalyses the reaction (6S)-5,6,7,8-tetrahydrofolate + formate + ATP = (6R)-10-formyltetrahydrofolate + ADP + phosphate. Its pathway is one-carbon metabolism; tetrahydrofolate interconversion. This Dehalococcoides mccartyi (strain CBDB1) protein is Formate--tetrahydrofolate ligase.